The following is a 103-amino-acid chain: SOSS complex subunit C (103 aa).

The protein belongs to the SOSS-C family. As to quaternary structure, belongs to the multiprotein complex Integrator. Component of the SOSS complex, composed of soss-b (soss-b1/nabp2 or soss-b2/nabp1), soss-a/ints3 and soss-c/inip.

The protein localises to the nucleus. Its function is as follows. Component of the SOSS complex, a multiprotein complex that functions downstream of the MRN complex to promote DNA repair and G2/M checkpoint. The SOSS complex associates with single-stranded DNA at DNA lesions and influences diverse endpoints in the cellular DNA damage response including cell-cycle checkpoint activation, recombinational repair and maintenance of genomic stability. Required for efficient homologous recombination-dependent repair of double-strand breaks (DSBs). This is SOSS complex subunit C (inip) from Danio rerio (Zebrafish).